The chain runs to 1370 residues: DNA-directed RNA polymerase subunit beta (1370 aa).

It belongs to the RNA polymerase beta chain family. As to quaternary structure, the RNAP catalytic core consists of 2 alpha, 1 beta, 1 beta' and 1 omega subunit. When a sigma factor is associated with the core the holoenzyme is formed, which can initiate transcription.

The enzyme catalyses RNA(n) + a ribonucleoside 5'-triphosphate = RNA(n+1) + diphosphate. In terms of biological role, DNA-dependent RNA polymerase catalyzes the transcription of DNA into RNA using the four ribonucleoside triphosphates as substrates. The sequence is that of DNA-directed RNA polymerase subunit beta from Bordetella bronchiseptica (strain ATCC BAA-588 / NCTC 13252 / RB50) (Alcaligenes bronchisepticus).